An 856-amino-acid chain; its full sequence is Leucine--tRNA ligase (856 aa).

Residues 53–63 carry the 'HIGH' region motif; the sequence is PYPSGNLHMGH. The 'KMSKS' region signature appears at 622–626; that stretch reads KMSKS. Lys625 contacts ATP.

The protein belongs to the class-I aminoacyl-tRNA synthetase family.

Its subcellular location is the cytoplasm. It carries out the reaction tRNA(Leu) + L-leucine + ATP = L-leucyl-tRNA(Leu) + AMP + diphosphate. This Prochlorococcus marinus (strain MIT 9312) protein is Leucine--tRNA ligase.